The chain runs to 254 residues: Nickel import ATP-binding protein NikD (254 aa).

Positions 2–241 (PQQIELRNIA…PKHTVTRSLV (240 aa)) constitute an ABC transporter domain. 36-43 (GGSGSGKS) lines the ATP pocket.

It belongs to the ABC transporter superfamily. Nickel importer (TC 3.A.1.5.3) family. In terms of assembly, the complex is composed of two ATP-binding proteins (NikD and NikE), two transmembrane proteins (NikB and NikC) and a solute-binding protein (NikA).

It localises to the cell inner membrane. It catalyses the reaction Ni(2+)(out) + ATP + H2O = Ni(2+)(in) + ADP + phosphate + H(+). In terms of biological role, part of the ABC transporter complex NikABCDE involved in nickel import. Responsible for energy coupling to the transport system. This chain is Nickel import ATP-binding protein NikD, found in Escherichia coli (strain K12).